The following is a 332-amino-acid chain: 2-hydroxyacid dehydrogenase homolog 2 (332 aa).

Residues 154–155, 233–235, and Asp-259 each bind NAD(+); these read KI and TSR. Arg-235 is a catalytic residue. The active site involves Glu-264. His-296 serves as the catalytic Proton donor. An NAD(+)-binding site is contributed by 296-299; sequence HQAF.

It belongs to the D-isomer specific 2-hydroxyacid dehydrogenase family.

It is found in the cytoplasm. Its subcellular location is the nucleus. The chain is 2-hydroxyacid dehydrogenase homolog 2 from Schizosaccharomyces pombe (strain 972 / ATCC 24843) (Fission yeast).